A 321-amino-acid chain; its full sequence is Peroxidase 27 (321 aa).

Positions 1 to 23 (MAASKRLVVSCLFLVLLFAQANS) are cleaved as a signal peptide. Cystine bridges form between cysteine 35-cysteine 113, cysteine 68-cysteine 73, cysteine 119-cysteine 317, and cysteine 196-cysteine 228. The Proton acceptor role is filled by histidine 66. The Ca(2+) site is built by aspartate 67, valine 70, glycine 72, aspartate 74, and serine 76. Substrate is bound at residue proline 159. Residue asparagine 164 is glycosylated (N-linked (GlcNAc...) asparagine). Histidine 189 is a heme b binding site. Residue threonine 190 coordinates Ca(2+). An N-linked (GlcNAc...) asparagine glycan is attached at asparagine 205. Ca(2+)-binding residues include aspartate 240, serine 243, and aspartate 248.

This sequence belongs to the peroxidase family. Classical plant (class III) peroxidase subfamily. The cofactor is heme b. Ca(2+) serves as cofactor. Expressed in the whole plant, but preferentially in roots and flowers.

The protein localises to the secreted. The enzyme catalyses 2 a phenolic donor + H2O2 = 2 a phenolic radical donor + 2 H2O. Functionally, removal of H(2)O(2), oxidation of toxic reductants, biosynthesis and degradation of lignin, suberization, auxin catabolism, response to environmental stresses such as wounding, pathogen attack and oxidative stress. These functions might be dependent on each isozyme/isoform in each plant tissue. The chain is Peroxidase 27 (PER27) from Arabidopsis thaliana (Mouse-ear cress).